Consider the following 79-residue polypeptide: Conotoxin Leo-O4 (79 aa).

Positions 1–22 (MKLTCMMLVAVLFLTAWTFVTA) are cleaved as a signal peptide. The propeptide occupies 23–51 (NVSRNGLENLFPEERHEMMNPNAAKLNNR). 3 cysteine pairs are disulfide-bonded: Cys-53–Cys-70, Cys-60–Cys-74, and Cys-69–Cys-78.

This sequence belongs to the conotoxin O1 superfamily. In terms of tissue distribution, expressed by the venom duct.

It is found in the secreted. The sequence is that of Conotoxin Leo-O4 from Conus leopardus (Leopard cone).